Consider the following 209-residue polypeptide: uncharacterized protein (209 aa).

Its subcellular location is the plastid. The protein resides in the chloroplast. This is an uncharacterized protein from Porphyra purpurea (Red seaweed).